We begin with the raw amino-acid sequence, 255 residues long: Borealin-2 (255 aa).

Disordered regions lie at residues 1 to 24 (MAPRRTRKVSQDSDGQADDQHSFE) and 107 to 156 (IQKP…STGS). Polar residues predominate over residues 124–135 (AGQQRSSSQSKT).

It belongs to the borealin family. In terms of assembly, component of the CPC complex.

It is found in the nucleus. Its subcellular location is the chromosome. The protein resides in the centromere. Component of the chromosomal passenger complex (CPC), a complex that acts as a key regulator of mitosis. The CPC complex has essential functions at the centromere in ensuring correct chromosome alignment and segregation and is required for chromatin-induced microtubule stabilization and spindle assembly. This is Borealin-2 (cdca9) from Danio rerio (Zebrafish).